The following is a 97-amino-acid chain: Putative pterin-4-alpha-carbinolamine dehydratase (97 aa).

It belongs to the pterin-4-alpha-carbinolamine dehydratase family.

It carries out the reaction (4aS,6R)-4a-hydroxy-L-erythro-5,6,7,8-tetrahydrobiopterin = (6R)-L-erythro-6,7-dihydrobiopterin + H2O. The chain is Putative pterin-4-alpha-carbinolamine dehydratase from Christiangramia forsetii (strain DSM 17595 / CGMCC 1.15422 / KT0803) (Gramella forsetii).